The chain runs to 536 residues: Protein ST7 homolog (536 aa).

2 consecutive transmembrane segments (helical) span residues 3–23 and 49–69; these read CSWTFLWLLWIALVAVLLFAL and FYVALTGTSSLVSGIILIFEW. The stretch at 191–218 forms a coiled coil; the sequence is LAEEESETVSQAENLLRRALRAIESTLN. Residues 465–485 traverse the membrane as a helical segment; the sequence is TLMMLLQTFICLAICILAVLA.

The protein belongs to the ST7 family.

The protein localises to the membrane. This chain is Protein ST7 homolog, found in Caenorhabditis elegans.